Here is a 185-residue protein sequence, read N- to C-terminus: Ribosome-recycling factor (185 aa).

The protein belongs to the RRF family.

The protein resides in the cytoplasm. Responsible for the release of ribosomes from messenger RNA at the termination of protein biosynthesis. May increase the efficiency of translation by recycling ribosomes from one round of translation to another. The protein is Ribosome-recycling factor of Wolbachia pipientis subsp. Culex pipiens (strain wPip).